Here is a 303-residue protein sequence, read N- to C-terminus: MASKDWYKLNFQIESDLEEIIIWKLNELGIFSFSFEYLIKTENKKEVNIWLPINEWDESSRSDFEKIICKLLNINDSINKFFDWSVIKEEDWLTSWKKYWAPELVGNHFLILPCWINLNEEFNDKQIIKIDPGAAFGTGSHPSTYLCLEKMEKILLSDKKVLDIGSGSGILSIAARLLGAKEVCAIDNDYLAINSTNSNFQLNFGNLNNLNTYLGSFNEVILKHQLKKIDFVVCNILAEVIKEMIPNIYKCLRNNGEVIFSGILNSQKDEIIKILIQNNLKLLDVSSRKDWACIYAQKAKNLT.

Thr-144, Gly-165, Asp-187, and Asn-235 together coordinate S-adenosyl-L-methionine.

The protein belongs to the methyltransferase superfamily. PrmA family.

The protein localises to the cytoplasm. The enzyme catalyses L-lysyl-[protein] + 3 S-adenosyl-L-methionine = N(6),N(6),N(6)-trimethyl-L-lysyl-[protein] + 3 S-adenosyl-L-homocysteine + 3 H(+). Its function is as follows. Methylates ribosomal protein L11. This chain is Ribosomal protein L11 methyltransferase, found in Prochlorococcus marinus (strain MIT 9312).